We begin with the raw amino-acid sequence, 379 residues long: Glucose-1-phosphate adenylyltransferase (379 aa).

Alpha-D-glucose 1-phosphate-binding positions include glycine 164, glutamate 179 to lysine 180, and serine 190.

Belongs to the bacterial/plant glucose-1-phosphate adenylyltransferase family. As to quaternary structure, homotetramer.

The catalysed reaction is alpha-D-glucose 1-phosphate + ATP + H(+) = ADP-alpha-D-glucose + diphosphate. The protein operates within glycan biosynthesis; glycogen biosynthesis. Functionally, involved in the biosynthesis of ADP-glucose, a building block required for the elongation reactions to produce glycogen. Catalyzes the reaction between ATP and alpha-D-glucose 1-phosphate (G1P) to produce pyrophosphate and ADP-Glc. The protein is Glucose-1-phosphate adenylyltransferase of Streptococcus agalactiae serotype Ia (strain ATCC 27591 / A909 / CDC SS700).